A 585-amino-acid chain; its full sequence is SCF E3 ubiquitin ligase complex F-box protein grrA (585 aa).

Over residues 1–10 the composition is skewed to polar residues; it reads MARSRQPTRF. Disordered stretches follow at residues 1-34 and 41-60; these read MARS…DTDF and DSQS…QNDP. Low complexity predominate over residues 11–25; that stretch reads SSEAPSESSSSTSPE. One can recognise an F-box domain in the interval 65–113; that stretch reads PPIAYLPPEILISIFSKLSSPRDLLSCLLVCRIWALNCVGLLWHRPSCN. LRR repeat units follow at residues 147–171, 172–197, 198–223, 224–249, 250–275, 276–301, 302–329, 330–355, 356–381, 382–407, 408–432, 433–465, and 466–491; these read TEDV…TLTN, CRKL…DVSE, LRSL…NITG, CVKV…KLNG, VSQV…DLQE, CKLV…RLAH, CTEI…DLTA, CENI…VLAK, CKFI…HLGH, CSNI…DLAC, CSRL…GLVK, CQLI…HLSY, and CVNL…SLTG.

As to quaternary structure, part of a SCF E3 ubiquitin ligase complex. As to expression, specifically expressed in ascus mother cells.

It localises to the cytoplasm. In terms of biological role, involved in meiosis and required for ascospore formation. Involved in substrate recognition in ubiquitin-dependent degradation. This Emericella nidulans (strain FGSC A4 / ATCC 38163 / CBS 112.46 / NRRL 194 / M139) (Aspergillus nidulans) protein is SCF E3 ubiquitin ligase complex F-box protein grrA (grrA).